A 185-amino-acid chain; its full sequence is Ribosome-recycling factor (185 aa).

Belongs to the RRF family.

It localises to the cytoplasm. Functionally, responsible for the release of ribosomes from messenger RNA at the termination of protein biosynthesis. May increase the efficiency of translation by recycling ribosomes from one round of translation to another. The polypeptide is Ribosome-recycling factor (Nocardioides sp. (strain ATCC BAA-499 / JS614)).